Reading from the N-terminus, the 403-residue chain is MSNRAVPQGYLANLQFRIRSDNLPLLSTVQPSRGHKRGGRAVNYAEFDNELLEDFSNFPTFDIDSDSNDEEQSSASAGNDDPQANANGGEAAGVNGQGSGDGGSANTGAGRHGKSQLTAEMEKNYKTGVPDLNEQKDSLNVLRYQKIRESFQHGKIAVPYRLYVPPELSTGQQEAILIPITLNVEHGNNTISDAFVWNVNDTSISVEDFVTTYCNDLGLYGNVSLHSQIVSSINEQIQELENVASLVIPDLEVVVNLTCTIQGKFFEDYFQWNLSDKSLSPEKFALIIVADLGLAREFAPGIAHSLHEYLLHVKKEWAEGSLHQDTVPNEAAFGYLAGVRLNIDDLGAKWAPKVEYLTQEEIQKREIEKERNMRRLKRESDRMGGGARRGRRRLDDLELTMKM.

The tract at residues 58–115 (FPTFDIDSDSNDEEQSSASAGNDDPQANANGGEAAGVNGQGSGDGGSANTGAGRHGKS) is disordered. The span at 63 to 72 (IDSDSNDEEQ) shows a compositional bias: acidic residues. The segment covering 84–94 (ANANGGEAAGV) has biased composition (low complexity). Residues 95-105 (NGQGSGDGGSA) are compositionally biased toward gly residues.

This sequence belongs to the SNF5 family.

The protein resides in the nucleus. Its function is as follows. Part of the chromatin structure-remodeling complex (RSC) which is involved in transcription regulation and nucleosome positioning. RSC is responsible for the transfer of a histone octamer from a nucleosome core particle to naked DNA. The reaction requires ATP and involves an activated RSC-nucleosome intermediate. Remodeling reaction also involves DNA translocation, DNA twist and conformational change. As a reconfigurer of centromeric and flanking nucleosomes, RSC complex is required both for proper kinetochore function in chromosome segregation and, via a PKC1-dependent signaling pathway, for organization of the cellular cytoskeleton. This subunit is essential for mitotic growth and required for cell cycle progression. The sequence is that of Chromatin structure-remodeling complex subunit SFH1 (SFH1) from Candida glabrata (strain ATCC 2001 / BCRC 20586 / JCM 3761 / NBRC 0622 / NRRL Y-65 / CBS 138) (Yeast).